The following is a 117-amino-acid chain: Hydrogenase maturation factor HypA (117 aa).

Position 2 (H2) interacts with Ni(2+). 4 residues coordinate Zn(2+): C73, C76, C89, and C92.

The protein belongs to the HypA/HybF family.

Involved in the maturation of [NiFe] hydrogenases. Required for nickel insertion into the metal center of the hydrogenase. The sequence is that of Hydrogenase maturation factor HypA from Pelodictyon phaeoclathratiforme (strain DSM 5477 / BU-1).